Reading from the N-terminus, the 599-residue chain is uncharacterized protein (599 aa).

Residues 1–13 (MSSSSSHNSFSGS) show a composition bias toward low complexity. 2 disordered regions span residues 1–27 (MSSSSSHNSFSGSKTNAAEGQNSIDGL) and 41–86 (YPSN…DDTN). Polar residues predominate over residues 14-27 (KTNAAEGQNSIDGL). The segment covering 44–70 (NEEKEVKETDIVPDENKVNELDVHKQS) has biased composition (basic and acidic residues). 14 consecutive transmembrane segments (helical) span residues 97 to 117 (IVVPALILTLFLAALDNTIVT), 135 to 155 (WIGSAYVLASNAVLPAVGVFC), 162 to 182 (IVLYICIFFFMLGSALCGASQ), 192 to 212 (AIQGLGGGGIISLVNIIISDI), 223 to 243 (GILATAWGAALVAGPIIGGAI), 251 to 271 (WIFFINLPSGGIATALIVVFL), 290 to 310 (FIGLVCVITGIVLILLGISLG), 321 to 341 (ILCYLIIGGCLFVFAFIYDTF), 359 to 379 (AALLACSSFFYLNYMLFAYYV), 396 to 416 (VHTIPCAAVLCFFCTTVGMVL), 423 to 443 (LPLIYVGYISCVAGMGAMICV), 452 to 472 (VMGLTTIFMFGSGFLFLPPLI), 489 to 509 (TLMFIRTMGGSIGITVGEVIF), and 552 to 572 (VIWIFCTVVMAIGFASIFFIK).

Belongs to the major facilitator superfamily. TCR/Tet family.

The protein resides in the membrane. This is an uncharacterized protein from Schizosaccharomyces pombe (strain 972 / ATCC 24843) (Fission yeast).